The following is a 395-amino-acid chain: F-box protein At5g46170 (395 aa).

Residues 24–72 (IDHFDHLPDSILLLVFNKIGDVKALGRCCVVSRRFHSLVPQVDNVVVRV) form the F-box domain. The segment at 122-158 (TKRSSSSCGGSGSSSSSLSISGDDDGGEIEQGGVTHH) is disordered. Positions 125-142 (SSSSCGGSGSSSSSLSIS) are enriched in low complexity.

This Arabidopsis thaliana (Mouse-ear cress) protein is F-box protein At5g46170.